Consider the following 122-residue polypeptide: Large ribosomal subunit protein uL14 (122 aa).

This sequence belongs to the universal ribosomal protein uL14 family. As to quaternary structure, part of the 50S ribosomal subunit. Forms a cluster with proteins L3 and L19. In the 70S ribosome, L14 and L19 interact and together make contacts with the 16S rRNA in bridges B5 and B8.

Binds to 23S rRNA. Forms part of two intersubunit bridges in the 70S ribosome. The polypeptide is Large ribosomal subunit protein uL14 (Burkholderia multivorans (strain ATCC 17616 / 249)).